Reading from the N-terminus, the 91-residue chain is Non-specific lipid-transfer protein P3 (91 aa).

Cystine bridges form between C3–C50, C13–C27, C28–C73, and C48–C87.

Its subcellular location is the secreted. In terms of biological role, plant non-specific lipid-transfer proteins transfer phospholipids as well as galactolipids across membranes. May play a role in wax or cutin deposition in the cell walls of expanding epidermal cells and certain secretory tissues. This chain is Non-specific lipid-transfer protein P3, found in Vitis sp. (Grape).